We begin with the raw amino-acid sequence, 648 residues long: Dystrotelin (648 aa).

The ZZ-type zinc-finger motif lies at 223 to 279; sequence QHRVHCHACKAFPITGLRYRCLKCLNVHLCQSCFLTERRSRKHKPSHSVLEYCTQPS. Zn(2+)-binding residues include Cys-228, Cys-231, Cys-243, Cys-246, Cys-252, Cys-255, His-265, and His-269. The stretch at 367–446 forms a coiled coil; it reads QRETAELQKD…LDTVRHLLSL (80 aa). Polar residues predominate over residues 455 to 474; it reads SHSNLQLEQDGSINENNWTQ. 2 disordered regions span residues 455 to 509 and 536 to 557; these read SHSN…DTLY and QREEEELQEEEEGLHEKEEGLP. Over residues 479-502 the composition is skewed to basic and acidic residues; the sequence is KPHESSSTEHEVEERGTRQERRFE. Residues 538-548 are compositionally biased toward acidic residues; it reads EEEELQEEEEG.

It is found in the cell membrane. The chain is Dystrotelin (dytn) from Danio rerio (Zebrafish).